Reading from the N-terminus, the 569-residue chain is Proline--tRNA ligase (569 aa).

This sequence belongs to the class-II aminoacyl-tRNA synthetase family. ProS type 1 subfamily. In terms of assembly, homodimer.

It localises to the cytoplasm. The enzyme catalyses tRNA(Pro) + L-proline + ATP = L-prolyl-tRNA(Pro) + AMP + diphosphate. Catalyzes the attachment of proline to tRNA(Pro) in a two-step reaction: proline is first activated by ATP to form Pro-AMP and then transferred to the acceptor end of tRNA(Pro). As ProRS can inadvertently accommodate and process non-cognate amino acids such as alanine and cysteine, to avoid such errors it has two additional distinct editing activities against alanine. One activity is designated as 'pretransfer' editing and involves the tRNA(Pro)-independent hydrolysis of activated Ala-AMP. The other activity is designated 'posttransfer' editing and involves deacylation of mischarged Ala-tRNA(Pro). The misacylated Cys-tRNA(Pro) is not edited by ProRS. The chain is Proline--tRNA ligase from Halalkalibacterium halodurans (strain ATCC BAA-125 / DSM 18197 / FERM 7344 / JCM 9153 / C-125) (Bacillus halodurans).